A 211-amino-acid chain; its full sequence is Ribonuclease P protein component 3 (211 aa).

Belongs to the eukaryotic/archaeal RNase P protein component 3 family. In terms of assembly, consists of a catalytic RNA component and at least 4-5 protein subunits.

It is found in the cytoplasm. The enzyme catalyses Endonucleolytic cleavage of RNA, removing 5'-extranucleotides from tRNA precursor.. Part of ribonuclease P, a protein complex that generates mature tRNA molecules by cleaving their 5'-ends. The sequence is that of Ribonuclease P protein component 3 from Aeropyrum pernix (strain ATCC 700893 / DSM 11879 / JCM 9820 / NBRC 100138 / K1).